A 568-amino-acid chain; its full sequence is Zinc finger protein 76 (568 aa).

Residue K24 forms a Glycyl lysine isopeptide (Lys-Gly) (interchain with G-Cter in SUMO2) linkage. A run of 3 repeats spans residues 34–45 (IQLEDGTTAYIH), 62–73 (VQLEDGSMAYIH), and 88–99 (VQLEDGSTAYIH). Positions 34–99 (IQLEDGTTAY…LEDGSTAYIH (66 aa)) are 3 X 12 AA approximate repeats. 7 C2H2-type zinc fingers span residues 165-189 (FRCGYKGCGRLYTTAHHLKVHERAH), 195-219 (YRCDFPSCGKAFATGYGLKSHVRTH), 225-249 (YKCPEELCSKAFKTSGDLQKHVRTH), 255-279 (FRCPFEGCGRSFTTSNIRKVHVRTH), 285-309 (YTCPEPHCGRGFTSATNYKNHVRIH), 315-339 (YVCTVPGCGKRFTEYSSLYKHHVVH), and 345-368 (YTCSSCGKTYRQTSTLAMHKRSAH). The disordered stretch occupies residues 365 to 402 (RSAHGELEATEESEQALYEQQQLEAASAAEESPPPKPT). The span at 379-395 (QALYEQQQLEAASAAEE) shows a compositional bias: low complexity.

It belongs to the krueppel C2H2-type zinc-finger protein family.

It localises to the nucleus. May be involved in transcriptional regulation. This Mus musculus (Mouse) protein is Zinc finger protein 76 (Znf76).